A 115-amino-acid chain; its full sequence is Nucleoid-associated protein alr5067 (115 aa).

Belongs to the YbaB/EbfC family. As to quaternary structure, homodimer.

Its subcellular location is the cytoplasm. It localises to the nucleoid. In terms of biological role, binds to DNA and alters its conformation. May be involved in regulation of gene expression, nucleoid organization and DNA protection. The polypeptide is Nucleoid-associated protein alr5067 (Nostoc sp. (strain PCC 7120 / SAG 25.82 / UTEX 2576)).